We begin with the raw amino-acid sequence, 176 residues long: Vitamin K epoxide reductase complex subunit 1-like protein 1 (176 aa).

Topologically, residues Met1–Arg13 are cytoplasmic. Residues Trp14–Val36 form a helical membrane-spanning segment. Residues Glu37–Asn87 are Lumenal-facing. A disulfide bridge connects residues Cys50 and Cys58. A (S)-warfarin-binding site is contributed by Asn87. Residues Ser88 to Gly102 traverse the membrane as a helical segment. Residues Met103 to Ala107 are Cytoplasmic-facing. Residues Val108–Leu135 form a helical membrane-spanning segment. Residues Lys136–Phe138 lie on the Lumenal side of the membrane. Cys139 and Cys142 are oxidised to a cystine. A helical membrane pass occupies residues Cys139–Leu160. Phylloquinone contacts are provided by Cys142 and Tyr146. Tyr146 contributes to the (S)-warfarin binding site. At Val161–Asp176 the chain is on the cytoplasmic side.

It belongs to the VKOR family.

Its subcellular location is the endoplasmic reticulum membrane. It catalyses the reaction phylloquinone + [protein]-disulfide + H2O = 2,3-epoxyphylloquinone + [protein]-dithiol. The catalysed reaction is phylloquinol + [protein]-disulfide = phylloquinone + [protein]-dithiol. Its activity is regulated as follows. Inhibited by warfarin (coumadin). Warfarin locks VKORC1 in both redox states into the closed conformation. Functionally, involved in vitamin K metabolism. Can reduce inactive vitamin K 2,3-epoxide to active vitamin K, and may contribute to vitamin K-mediated protection against oxidative stress. Plays a role in vitamin K-dependent gamma-carboxylation of Glu residues in target proteins. This Homo sapiens (Human) protein is Vitamin K epoxide reductase complex subunit 1-like protein 1 (VKORC1L1).